The chain runs to 442 residues: QWRF motif-containing protein 6 (442 aa).

Disordered stretches follow at residues 1–144 (MEAK…LSQQ) and 221–240 (FSRLGLPLPPMAPKVPADTK). Over residues 57-66 (KQHHLQHHQI) the composition is skewed to basic residues. A compositionally biased stretch (basic and acidic residues) spans 80–89 (KMADGDENRS). The short motif at 264 to 267 (QWRF) is the QWRF motif element.

Belongs to the QWRF family.

The polypeptide is QWRF motif-containing protein 6 (QWRF6) (Arabidopsis thaliana (Mouse-ear cress)).